Consider the following 154-residue polypeptide: 17 kDa surface antigen (154 aa).

The first 19 residues, 1–19 (MKLLSKIMIIALAASMLQA), serve as a signal peptide directing secretion. Cys20 carries the N-palmitoyl cysteine lipid modification. The S-diacylglycerol cysteine moiety is linked to residue Cys20.

The protein belongs to the rickettsiale 17 kDa surface antigen family.

The protein resides in the cell outer membrane. The polypeptide is 17 kDa surface antigen (omp) (Rickettsia rhipicephali).